Here is a 482-residue protein sequence, read N- to C-terminus: Aspartyl/glutamyl-tRNA(Asn/Gln) amidotransferase subunit B (482 aa).

It belongs to the GatB/GatE family. GatB subfamily. Heterotrimer of A, B and C subunits.

The enzyme catalyses L-glutamyl-tRNA(Gln) + L-glutamine + ATP + H2O = L-glutaminyl-tRNA(Gln) + L-glutamate + ADP + phosphate + H(+). It catalyses the reaction L-aspartyl-tRNA(Asn) + L-glutamine + ATP + H2O = L-asparaginyl-tRNA(Asn) + L-glutamate + ADP + phosphate + 2 H(+). Functionally, allows the formation of correctly charged Asn-tRNA(Asn) or Gln-tRNA(Gln) through the transamidation of misacylated Asp-tRNA(Asn) or Glu-tRNA(Gln) in organisms which lack either or both of asparaginyl-tRNA or glutaminyl-tRNA synthetases. The reaction takes place in the presence of glutamine and ATP through an activated phospho-Asp-tRNA(Asn) or phospho-Glu-tRNA(Gln). The sequence is that of Aspartyl/glutamyl-tRNA(Asn/Gln) amidotransferase subunit B from Ehrlichia canis (strain Jake).